Consider the following 328-residue polypeptide: Phenylalanine--tRNA ligase alpha subunit (328 aa).

E245 provides a ligand contact to Mg(2+).

It belongs to the class-II aminoacyl-tRNA synthetase family. Phe-tRNA synthetase alpha subunit type 1 subfamily. As to quaternary structure, tetramer of two alpha and two beta subunits. The cofactor is Mg(2+).

The protein resides in the cytoplasm. It catalyses the reaction tRNA(Phe) + L-phenylalanine + ATP = L-phenylalanyl-tRNA(Phe) + AMP + diphosphate + H(+). In Helicobacter pylori (strain G27), this protein is Phenylalanine--tRNA ligase alpha subunit.